A 519-amino-acid polypeptide reads, in one-letter code: Transmembrane protein 180 (519 aa).

Topologically, residues 1–11 are extracellular; the sequence is MGLDWPQAWLL. A helical membrane pass occupies residues 12 to 43; that stretch reads GLPIAVVYGSLALFTSILHNVFLLYYVDTFVS. Topologically, residues 44–55 are cytoplasmic; that stretch reads VYKINKVSFWVG. A helical transmembrane segment spans residues 56 to 74; sequence ETVFLLWNSFNDPLFGWLS. Over 75–100 the chain is Extracellular; the sequence is DRQLLSSQPRSGAGLSSRDVVLTRVR. Residues 101–118 traverse the membrane as a helical segment; it reads ALGWHGPLLALSFLAFWV. Residues 119-126 lie on the Cytoplasmic side of the membrane; sequence PWAPAGLQ. A helical transmembrane segment spans residues 127–151; that stretch reads FLLCLCLYDGFLTLVDLHHHALLAD. At 152–155 the chain is on the extracellular side; the sequence is LALS. Residues 156-179 traverse the membrane as a helical segment; that stretch reads SHDRTHLNFYCSLFSAAGSLSVFA. Over 180–191 the chain is Cytoplasmic; that stretch reads SYAFWNKEDFSS. A helical transmembrane segment spans residues 192-223; that stretch reads FRAFCVVLAAGSGLGFLGTTQLLKRQIEATRR. Topologically, residues 224–264 are extracellular; the sequence is DRGCPGLDLDGGVCEEEPPVGGEEAGNITLGQYLRQLARHQ. Asn-250 is a glycosylation site (N-linked (GlcNAc...) asparagine). The helical transmembrane segment at 265-292 threads the bilayer; sequence NFLWFVGMDLVQVFHCHFNSNFFPLFLE. The Cytoplasmic portion of the chain corresponds to 293–305; the sequence is HLLSDHISLSTGS. Residues 306-325 traverse the membrane as a helical segment; that stretch reads FLLGISYVAPHLNNLYFLPL. Residues 326-330 are Extracellular-facing; that stretch reads CRRWG. A helical membrane pass occupies residues 331–350; it reads VYAVVRGLFLLKLSLSLLML. Residues 351–358 are Cytoplasmic-facing; sequence LAGPDHPG. A helical transmembrane segment spans residues 359-393; that stretch reads LLCFFIASNRVFTEGTCKLLTLVVTDLVDEDLVLN. The Extracellular portion of the chain corresponds to 394–402; the sequence is HRKQAASAL. A helical transmembrane segment spans residues 403-429; that stretch reads LFGMVALVTKPGQTFAPLLGTWLLCFY. Residues 430-468 are Cytoplasmic-facing; it reads TGHDLFQQSPMTPVGSVRPWPELPAPAPAPAQAPTLRQG. Residues 469–487 traverse the membrane as a helical segment; it reads CFYLLVFVPITCALLQLFT. The Extracellular portion of the chain corresponds to 488 to 519; the sequence is WSQFTLHGRRLRTVKAQRQNLAQIHTLNIKMV.

Its subcellular location is the cell membrane. The sequence is that of Transmembrane protein 180 from Mus musculus (Mouse).